Consider the following 416-residue polypeptide: Protein LAZY 1 (416 aa).

A helical membrane pass occupies residues 63–83 (FTFGGSGLLTIGTLGIAAVAI). The IGT motif motif lies at 69-75 (GLLTIGT). Disordered regions lie at residues 266–306 (AAAA…GMPA) and 337–361 (KKSR…DGPL). Over residues 270–282 (GVGGDRAGKGGGY) the composition is skewed to gly residues. Residues 278–295 (KGGGYKTMKKRKVKDEKG) carry the Nuclear localization signal motif.

This sequence belongs to the LAZY family. Expressed specifically in the cells at the inner side of the vascular bundles of young leaf sheaths and peripheral cylinders of vascular bundles in the unelongated stems. Expressed in the leaf sheath pulvinus and the lamina joint.

It localises to the cell membrane. The protein localises to the nucleus. In terms of biological role, involved in the regulation of shoot gravitropism and tiller angle through negative regulation of basipetal polar auxin transport (PAT). Acts as positive regulator of lateral auxin transport. Promotes vertical shoot growth. LAZY1 and TAC1 play opposite functions in the regulation of tiller growth angle. The protein is Protein LAZY 1 of Oryza sativa subsp. japonica (Rice).